A 271-amino-acid chain; its full sequence is L-aspartate dehydrogenase (271 aa).

2 residues coordinate NAD(+): Ala124 and Asn192. His222 is an active-site residue.

This sequence belongs to the L-aspartate dehydrogenase family.

It catalyses the reaction L-aspartate + NADP(+) + H2O = oxaloacetate + NH4(+) + NADPH + H(+). It carries out the reaction L-aspartate + NAD(+) + H2O = oxaloacetate + NH4(+) + NADH + H(+). Its pathway is cofactor biosynthesis; NAD(+) biosynthesis; iminoaspartate from L-aspartate (dehydrogenase route): step 1/1. In terms of biological role, specifically catalyzes the NAD or NADP-dependent dehydrogenation of L-aspartate to iminoaspartate. The sequence is that of L-aspartate dehydrogenase from Methanosarcina barkeri (strain Fusaro / DSM 804).